Consider the following 388-residue polypeptide: Cell adhesion molecule 4 (388 aa).

The signal sequence occupies residues 1-20; sequence MGRARRFQWPLLLLWAAAAG. Positions 21–119 constitute an Ig-like V-type domain; sequence PGTAQEVQTE…DTHHQIATLT (99 aa). Topologically, residues 25 to 324 are extracellular; sequence QEVQTENVTV…VEAQTSVPYA (300 aa). N-linked (GlcNAc...) asparagine glycosylation is found at Asn-31 and Asn-67. Intrachain disulfides connect Cys-44–Cys-104, Cys-145–Cys-199, and Cys-245–Cys-291. 2 consecutive Ig-like C2-type domains span residues 124–219 and 224–307; these read PENP…YVLD and PTAR…YVLV. N-linked (GlcNAc...) asparagine glycosylation is present at Asn-286. The helical transmembrane segment at 325-345 threads the bilayer; the sequence is IVGGILALLVFLIICVLVGMV. Topologically, residues 346–388 are cytoplasmic; the sequence is WCSVRQKGSYLTHEASGLDEQGEAREAFLNGSDGHKRKEEFFI. Ser-361 bears the Phosphoserine mark.

Belongs to the nectin family. Monomer and homodimer. Post-translationally, N-glycosylated.

It is found in the membrane. In terms of biological role, involved in the cell-cell adhesion. Has calcium- and magnesium-independent cell-cell adhesion activity. May have tumor-suppressor activity. In Rattus norvegicus (Rat), this protein is Cell adhesion molecule 4 (Cadm4).